Consider the following 575-residue polypeptide: Beta-amylase (575 aa).

The N-terminal stretch at 1–36 is a signal peptide; it reads MLHSQKRIWKKIGLCLLSFILGITVFTGSFGSKAEA. D77 is a binding site for substrate. E84 and D88 together coordinate Ca(2+). 2 residues coordinate substrate: H117 and D125. An intrachain disulfide couples C119 to C127. E171 is a binding site for Ca(2+). Catalysis depends on E199, which acts as the Proton donor. Residues K315, H320, and T358 each contribute to the substrate site. E395 functions as the Proton acceptor in the catalytic mechanism. Substrate-binding positions include 396 to 397 and R424; that span reads NA.

It belongs to the glycosyl hydrolase 14 family. In terms of assembly, monomer. Ca(2+) is required as a cofactor.

The enzyme catalyses Hydrolysis of (1-&gt;4)-alpha-D-glucosidic linkages in polysaccharides so as to remove successive maltose units from the non-reducing ends of the chains.. The chain is Beta-amylase from Niallia circulans (Bacillus circulans).